Here is an 89-residue protein sequence, read N- to C-terminus: MYLTSEKKEEIFSKHGKGKNDTGSAEGQIALFTHRIAHLSEHLKTNRKDYNTERSLVMLVGKRRSLLDYLMKKDIIRYRAIVKELGLRK.

Residues 1-13 (MYLTSEKKEEIFS) show a composition bias toward basic and acidic residues. A disordered region spans residues 1–24 (MYLTSEKKEEIFSKHGKGKNDTGS).

It belongs to the universal ribosomal protein uS15 family. As to quaternary structure, part of the 30S ribosomal subunit. Forms a bridge to the 50S subunit in the 70S ribosome, contacting the 23S rRNA.

Functionally, one of the primary rRNA binding proteins, it binds directly to 16S rRNA where it helps nucleate assembly of the platform of the 30S subunit by binding and bridging several RNA helices of the 16S rRNA. Forms an intersubunit bridge (bridge B4) with the 23S rRNA of the 50S subunit in the ribosome. This Christiangramia forsetii (strain DSM 17595 / CGMCC 1.15422 / KT0803) (Gramella forsetii) protein is Small ribosomal subunit protein uS15.